A 233-amino-acid polypeptide reads, in one-letter code: 5'-methylthioadenosine/S-adenosylhomocysteine nucleosidase (233 aa).

Glu12 serves as the catalytic Proton acceptor. Substrate-binding positions include Gly78, Ile156, and Met177–Glu178. Asp201 (proton donor) is an active-site residue.

The protein belongs to the PNP/UDP phosphorylase family. MtnN subfamily.

It carries out the reaction S-adenosyl-L-homocysteine + H2O = S-(5-deoxy-D-ribos-5-yl)-L-homocysteine + adenine. The catalysed reaction is S-methyl-5'-thioadenosine + H2O = 5-(methylsulfanyl)-D-ribose + adenine. It catalyses the reaction 5'-deoxyadenosine + H2O = 5-deoxy-D-ribose + adenine. It participates in amino-acid biosynthesis; L-methionine biosynthesis via salvage pathway; S-methyl-5-thio-alpha-D-ribose 1-phosphate from S-methyl-5'-thioadenosine (hydrolase route): step 1/2. In terms of biological role, catalyzes the irreversible cleavage of the glycosidic bond in both 5'-methylthioadenosine (MTA) and S-adenosylhomocysteine (SAH/AdoHcy) to adenine and the corresponding thioribose, 5'-methylthioribose and S-ribosylhomocysteine, respectively. Also cleaves 5'-deoxyadenosine, a toxic by-product of radical S-adenosylmethionine (SAM) enzymes, into 5-deoxyribose and adenine. The chain is 5'-methylthioadenosine/S-adenosylhomocysteine nucleosidase from Listeria monocytogenes serovar 1/2a (strain ATCC BAA-679 / EGD-e).